Reading from the N-terminus, the 280-residue chain is Nitrogenase iron protein (280 aa).

8-15 (GKGGIGKS) serves as a coordination point for ATP. Cysteine 95 serves as a coordination point for [4Fe-4S] cluster. Arginine 98 is modified (ADP-ribosylarginine; by dinitrogenase reductase ADP-ribosyltransferase). Cysteine 128 lines the [4Fe-4S] cluster pocket.

It belongs to the NifH/BchL/ChlL family. Homodimer. The cofactor is [4Fe-4S] cluster. The reversible ADP-ribosylation of Arg-98 inactivates the nitrogenase reductase and regulates nitrogenase activity.

The enzyme catalyses N2 + 8 reduced [2Fe-2S]-[ferredoxin] + 16 ATP + 16 H2O = H2 + 8 oxidized [2Fe-2S]-[ferredoxin] + 2 NH4(+) + 16 ADP + 16 phosphate + 6 H(+). In terms of biological role, the key enzymatic reactions in nitrogen fixation are catalyzed by the nitrogenase complex, which has 2 components: the iron protein and the molybdenum-iron protein. This chain is Nitrogenase iron protein, found in Methanospirillum hungatei JF-1 (strain ATCC 27890 / DSM 864 / NBRC 100397 / JF-1).